A 47-amino-acid chain; its full sequence is Defensin-like protein 1 (47 aa).

Disulfide bonds link C3–C47, C14–C36, C20–C41, and C24–C43.

It belongs to the DEFL family. Protease inhibitor I18 (RTI/MTI-2) subfamily.

This is Defensin-like protein 1 from Sorghum bicolor (Sorghum).